A 946-amino-acid polypeptide reads, in one-letter code: C-1-tetrahydrofolate synthase, cytoplasmic (946 aa).

The interval 2-319 (AGQVLDGKAC…PPLPLKLLTP (318 aa)) is methylenetetrahydrofolate dehydrogenase and cyclohydrolase. Substrate is bound by residues 51–55 (YVRMK) and 98–100 (VQL). Residue 169–171 (GRS) participates in NADP(+) binding. Serine 176 bears the Phosphoserine mark. Serine 194 provides a ligand contact to NADP(+). 277–281 (PGGVG) lines the substrate pocket. At threonine 318 the chain carries Phosphothreonine. The tract at residues 320–946 (VPSDIDISRA…DDDGEIDGLF (627 aa)) is formyltetrahydrofolate synthetase. Position 322 is a phosphoserine (serine 322). An ATP-binding site is contributed by 384–391 (TPLGEGKS).

It in the N-terminal section; belongs to the tetrahydrofolate dehydrogenase/cyclohydrolase family. In the C-terminal section; belongs to the formate--tetrahydrofolate ligase family. As to quaternary structure, homodimer.

Its subcellular location is the cytoplasm. The protein localises to the nucleus. The enzyme catalyses (6R)-5,10-methylene-5,6,7,8-tetrahydrofolate + NADP(+) = (6R)-5,10-methenyltetrahydrofolate + NADPH. The catalysed reaction is (6R)-5,10-methenyltetrahydrofolate + H2O = (6R)-10-formyltetrahydrofolate + H(+). It catalyses the reaction (6S)-5,6,7,8-tetrahydrofolate + formate + ATP = (6R)-10-formyltetrahydrofolate + ADP + phosphate. It participates in one-carbon metabolism; tetrahydrofolate interconversion. Cytoplasmic isozyme of C-1-tetrahydrofolate synthase. The trifunctional enzyme catalyzes the interconversion of the one-carbon derivatives of tetrahydrofolate (THF) between different oxidation states by the enzymatic activities 10-formyltetrahydrofolate synthetase, 5,lO-methenyltetrahydrofolate cyclohydrolase, and 5,lO-methylenetetrahydrofolate dehydrogenase. Involved in the generation of one-carbon intermediates in the biosynthesis of the purine bases. The chain is C-1-tetrahydrofolate synthase, cytoplasmic (ADE3) from Saccharomyces cerevisiae (strain ATCC 204508 / S288c) (Baker's yeast).